The sequence spans 326 residues: Acyl-CoA-binding domain-containing protein 4 (326 aa).

Positions 10 to 99 constitute an ACB domain; sequence CQKQFQAAVS…MKLVAQKVID (90 aa). An acyl-CoA contacts are provided by residues 21–30, 41–45, lysine 67, and tyrosine 86; these read IQNLPKNGSY and YSYYK. 2 disordered regions span residues 147–170 and 223–248; these read VQAA…SRLP and KEAA…SLMG. Serine 164 is subject to Phosphoserine.

Binds medium- and long-chain acyl-CoA esters and may function as an intracellular carrier of acyl-CoA esters. This chain is Acyl-CoA-binding domain-containing protein 4 (Acbd4), found in Rattus norvegicus (Rat).